The following is a 441-amino-acid chain: Keratin, type I cytoskeletal 17 (441 aa).

Residues 1–23 are disordered; it reads MTTTIRHFSSGSIKGSSGLAGGS. The tract at residues 1–91 is head; the sequence is MTTTIRHFSS…GGVDGLLVGG (91 aa). Low complexity predominate over residues 9–23; that stretch reads SSGSIKGSSGLAGGS. The residue at position 12 (Ser12) is a Phosphoserine. A Glycyl lysine isopeptide (Lys-Gly) (interchain with G-Cter in SUMO1); alternate cross-link involves residue Lys14. Lys14 is covalently cross-linked (Glycyl lysine isopeptide (Lys-Gly) (interchain with G-Cter in SUMO2); alternate). Phosphoserine occurs at positions 24, 30, 32, and 37. Ser42 carries the post-translational modification Phosphoserine; by RPS6KA1. The segment at 92–128 is coil 1A; that stretch reads EKATMQNLNDRLASYLDKVRALEEANTELELKIRDWY. An IF rod domain is found at 92–403; it reads EKATMQNLND…RLLEGEDAHL (312 aa). Position 118 is a phosphothreonine (Thr118). A linker 1 region spans residues 129–146; the sequence is QKQAPGPAPDYSSYFKTI. Residues 147 to 238 form a coil 1B region; the sequence is EDLRNKIHTA…NHEEEMKALR (92 aa). Positions 239 to 258 are linker 12; the sequence is GQVGGEINVEMDAAPGVDLS. The segment at 259-400 is coil 2; that stretch reads RILNEMRDQY…TYRRLLEGED (142 aa). Lys286 is covalently cross-linked (Glycyl lysine isopeptide (Lys-Gly) (interchain with G-Cter in SUMO2)). The residue at position 287 (Thr287) is a Phosphothreonine. Residue Ser331 is modified to Phosphoserine. The tract at residues 401-441 is tail; it reads AHLTQYKTKEPVTTRQVRTIVEEVQDGRVISSREQVHQTSH. Glycyl lysine isopeptide (Lys-Gly) (interchain with G-Cter in SUMO1); alternate cross-links involve residues Lys407 and Lys409. Glycyl lysine isopeptide (Lys-Gly) (interchain with G-Cter in SUMO2); alternate cross-links involve residues Lys407 and Lys409.

Belongs to the intermediate filament family. Heterodimer of a type I and a type II keratin. KRT17 associates with KRT6 isomers (KRT6A or KRT6B). Interacts with TRADD and SFN. In terms of processing, phosphorylation at Ser-42 occurs in a growth- and stress-dependent fashion in skin keratinocytes, it has no effect on filament organization.

It is found in the cytoplasm. In terms of biological role, type I keratin involved in the formation and maintenance of various skin appendages, specifically in determining shape and orientation of hair. Required for the correct growth of hair follicles, in particular for the persistence of the anagen (growth) state. Modulates the function of TNF-alpha in the specific context of hair cycling. Regulates protein synthesis and epithelial cell growth through binding to the adapter protein SFN and by stimulating Akt/mTOR pathway. Involved in tissue repair. May be a marker of basal cell differentiation in complex epithelia and therefore indicative of a certain type of epithelial 'stem cells'. Acts as a promoter of epithelial proliferation by acting a regulator of immune response in skin: promotes Th1/Th17-dominated immune environment contributing to the development of basaloid skin tumors. May act as an autoantigen in the immunopathogenesis of psoriasis, with certain peptide regions being a major target for autoreactive T-cells and hence causing their proliferation. The polypeptide is Keratin, type I cytoskeletal 17 (Bos taurus (Bovine)).